Here is a 118-residue protein sequence, read N- to C-terminus: Small ribosomal subunit protein uS13 (118 aa).

A disordered region spans residues 94–118; the sequence is GLPLRGQRTRTNARTRKGPRKAIRK.

Belongs to the universal ribosomal protein uS13 family. In terms of assembly, part of the 30S ribosomal subunit. Forms a loose heterodimer with protein S19. Forms two bridges to the 50S subunit in the 70S ribosome.

Its function is as follows. Located at the top of the head of the 30S subunit, it contacts several helices of the 16S rRNA. In the 70S ribosome it contacts the 23S rRNA (bridge B1a) and protein L5 of the 50S subunit (bridge B1b), connecting the 2 subunits; these bridges are implicated in subunit movement. Contacts the tRNAs in the A and P-sites. This chain is Small ribosomal subunit protein uS13, found in Xanthomonas axonopodis pv. citri (strain 306).